The sequence spans 215 residues: Probable septum site-determining protein MinC (215 aa).

This sequence belongs to the MinC family. As to quaternary structure, interacts with MinD and FtsZ.

Its function is as follows. Cell division inhibitor that blocks the formation of polar Z ring septums. Rapidly oscillates between the poles of the cell to destabilize FtsZ filaments that have formed before they mature into polar Z rings. Prevents FtsZ polymerization. This Clostridium botulinum (strain Alaska E43 / Type E3) protein is Probable septum site-determining protein MinC.